Here is a 195-residue protein sequence, read N- to C-terminus: 2-hydroxychromene-2-carboxylate isomerase (195 aa).

Serine 13 serves as the catalytic Nucleophile. Serine 13 provides a ligand contact to glutathione. Substrate-binding positions include lysine 45 and 55–56; that span reads NR. Position 181-184 (181-184) interacts with glutathione; sequence WGND.

Belongs to the GST superfamily. NadH family. Glutathione is required as a cofactor.

It catalyses the reaction 2-hydroxychromene-2-carboxylate = (3E)-4-(2-hydroxyphenyl)-2-oxobut-3-enoate. With respect to regulation, activated by salicylate. In terms of biological role, involved in the naphthalene and naphthalenesulfonate catabolic pathway. Catalyzes the reversible glutathione-dependent isomerization of 2-hydroxychromene-2-carboxylate (HCCA) to trans-O-hydroxybenzylidenepyruvate (THBPA). It can also use 2-hydroxybenzo[g]chromene-2-carboxylate as substrate. In Sphingobium xenophagum, this protein is 2-hydroxychromene-2-carboxylate isomerase (nsaD).